The primary structure comprises 446 residues: ATP-dependent protease ATPase subunit HslU (446 aa).

ATP is bound by residues isoleucine 17, glycine 59–glutamate 64, aspartate 255, glutamate 320, and arginine 392.

This sequence belongs to the ClpX chaperone family. HslU subfamily. In terms of assembly, a double ring-shaped homohexamer of HslV is capped on each side by a ring-shaped HslU homohexamer. The assembly of the HslU/HslV complex is dependent on binding of ATP.

Its subcellular location is the cytoplasm. Functionally, ATPase subunit of a proteasome-like degradation complex; this subunit has chaperone activity. The binding of ATP and its subsequent hydrolysis by HslU are essential for unfolding of protein substrates subsequently hydrolyzed by HslV. HslU recognizes the N-terminal part of its protein substrates and unfolds these before they are guided to HslV for hydrolysis. In Pseudomonas fluorescens (strain ATCC BAA-477 / NRRL B-23932 / Pf-5), this protein is ATP-dependent protease ATPase subunit HslU.